Consider the following 1086-residue polypeptide: Tyrosine-protein kinase receptor svh-2 (1086 aa).

Positions 1–34 (MVLGSSQSSAKELTTQSSIFRFLVLLLCFTSATG) are cleaved as a signal peptide. The Extracellular segment spans residues 35 to 651 (GQINGKLLNG…DKKGSSPGWK (617 aa)). N-linked (GlcNAc...) asparagine glycans are attached at residues N276, N299, N461, N554, and N617. The helical transmembrane segment at 652–672 (IAIAIISVMTIILIVAIIVYY) threads the bilayer. Residues 673–1086 (MRNRFPRIKT…LLSECSETSV (414 aa)) are Cytoplasmic-facing. In terms of domain architecture, Protein kinase spans 735 to 996 (VDKLDPIGQG…SDLVTIIPNV (262 aa)). Residues 741–749 (IGQGHYGVV) and K767 contribute to the ATP site. The Proton acceptor role is filled by D858. Position 890 is a phosphotyrosine (Y890). The segment at 1056-1086 (AELPSDSPSTSTAIPQSTPYQLLSECSETSV) is disordered. A compositionally biased stretch (polar residues) spans 1061–1086 (DSPSTSTAIPQSTPYQLLSECSETSV).

Belongs to the protein kinase superfamily. Tyr protein kinase family. As to quaternary structure, interacts (via cytoplasmic domain) with mlk-1. Interacts with shc-1 (via SH2 domain). May interact (when tyrosine-phosphorylated) with tns-1 (via SH2 domain). In terms of processing, may be autophosphorylated on Tyr-890 following dimerization. As to expression, expressed in body wall and vulva muscles, pharynx, intestine, excretory canals, distal tip cells and some neurons. Expressed in D-type motor neurons upon axon injury.

The protein resides in the cell membrane. The catalysed reaction is L-tyrosyl-[protein] + ATP = O-phospho-L-tyrosyl-[protein] + ADP + H(+). Receptor tyrosine kinase which may phosphorylate mlk-1, a component of the mlk-1, mek-1 and kgb-1 pathway. Involved in axon regeneration after injury by promoting the generation of productive and stable growth cones. The sequence is that of Tyrosine-protein kinase receptor svh-2 from Caenorhabditis elegans.